Reading from the N-terminus, the 258-residue chain is MDAWVRFSAQSQARERLCRAAQYACSLLGHALQKHGASPELQKQIRQLEGHLSLGRKLLRLGNSADALESAKRAVHLSDVVLRFCITVSHLNRALYFACDNVLWAGKSGLAPRVDQEKWAQRSFRYYLFSLIMNLSRDAYEIRLLMEQESSACSRRLKGSGGVSGGIEPGGPGGPGIPGGGLPQVALKLRLRVLLLARVLRGHPPLLLDVVRNACDLFIPLDKLGLWRCGPGIVGLCGLVSSILSILTLICPWLRLKP.

Lysine 43 is subject to N6-acetyllysine. An interaction with PEX19, PEX11G and FIS1 and peroxisome targeting region spans residues 210–258; sequence VVRNACDLFIPLDKLGLWRCGPGIVGLCGLVSSILSILTLICPWLRLKP. The chain crosses the membrane as a helical span at residues 232 to 254; sequence GIVGLCGLVSSILSILTLICPWL.

Belongs to the peroxin-11 family. As to quaternary structure, homodimer. Heterodimer with PEX11G. Interacts with PEX19. Interacts with FIS1.

Its subcellular location is the peroxisome membrane. In terms of biological role, involved in peroxisomal proliferation. May regulate peroxisome division by recruiting the dynamin-related GTPase DNM1L to the peroxisomal membrane. Promotes membrane protrusion and elongation on the peroxisomal surface. This Bos taurus (Bovine) protein is Peroxisomal membrane protein 11B (PEX11B).